A 136-amino-acid polypeptide reads, in one-letter code: Lipoprotein YghG (136 aa).

A signal peptide spans 1–24 (MSIKQMPGRVLISLLLSVTGLLSG). Cysteine 25 is lipidated: N-palmitoyl cysteine. Cysteine 25 carries the S-diacylglycerol cysteine lipid modification.

This sequence belongs to the GspS/AspS pilotin family.

The protein localises to the cell outer membrane. Involved in a type II secretion system (T2SS, formerly general secretion pathway, GSP) for the export of folded proteins across the outer membrane. In a functional T2SS this subunit helps assemble the outer membrane channel. This chain is Lipoprotein YghG (yghG), found in Escherichia coli (strain K12).